A 414-amino-acid polypeptide reads, in one-letter code: Methyltransferase-like protein 2 (414 aa).

The tract at residues 56–77 is disordered; it reads LNQHSSESNPKKRKRKQKNSSF.

Belongs to the MT-A70-like family.

Functionally, probable methyltransferase. The polypeptide is Methyltransferase-like protein 2 (Arabidopsis thaliana (Mouse-ear cress)).